We begin with the raw amino-acid sequence, 205 residues long: Thiamine-phosphate synthase (205 aa).

4-amino-2-methyl-5-(diphosphooxymethyl)pyrimidine is bound by residues 37-41 (QVREK) and Asn69. Residues Asp70 and Asp89 each contribute to the Mg(2+) site. Residue Ser108 participates in 4-amino-2-methyl-5-(diphosphooxymethyl)pyrimidine binding. 134–136 (TGS) serves as a coordination point for 2-[(2R,5Z)-2-carboxy-4-methylthiazol-5(2H)-ylidene]ethyl phosphate. Lys137 provides a ligand contact to 4-amino-2-methyl-5-(diphosphooxymethyl)pyrimidine. Residues Gly165 and 185–186 (IS) each bind 2-[(2R,5Z)-2-carboxy-4-methylthiazol-5(2H)-ylidene]ethyl phosphate.

Belongs to the thiamine-phosphate synthase family. The cofactor is Mg(2+).

The enzyme catalyses 2-[(2R,5Z)-2-carboxy-4-methylthiazol-5(2H)-ylidene]ethyl phosphate + 4-amino-2-methyl-5-(diphosphooxymethyl)pyrimidine + 2 H(+) = thiamine phosphate + CO2 + diphosphate. The catalysed reaction is 2-(2-carboxy-4-methylthiazol-5-yl)ethyl phosphate + 4-amino-2-methyl-5-(diphosphooxymethyl)pyrimidine + 2 H(+) = thiamine phosphate + CO2 + diphosphate. It carries out the reaction 4-methyl-5-(2-phosphooxyethyl)-thiazole + 4-amino-2-methyl-5-(diphosphooxymethyl)pyrimidine + H(+) = thiamine phosphate + diphosphate. It functions in the pathway cofactor biosynthesis; thiamine diphosphate biosynthesis; thiamine phosphate from 4-amino-2-methyl-5-diphosphomethylpyrimidine and 4-methyl-5-(2-phosphoethyl)-thiazole: step 1/1. Condenses 4-methyl-5-(beta-hydroxyethyl)thiazole monophosphate (THZ-P) and 2-methyl-4-amino-5-hydroxymethyl pyrimidine pyrophosphate (HMP-PP) to form thiamine monophosphate (TMP). The protein is Thiamine-phosphate synthase of Clostridium botulinum (strain Loch Maree / Type A3).